The chain runs to 502 residues: Alpha-globin transcription factor CP2 (502 aa).

The 238-residue stretch at 63-300 folds into the Grh/CP2 DB domain; it reads EILPFQYVLC…SPGFNSSHSS (238 aa). The segment at 133–386 is DNA-binding; it reads EHQQLEGWRW…LFNALKGRMV (254 aa). Residues 241–265 are compositionally biased toward basic and acidic residues; that stretch reads KGADRKQKIDREKMEKRTPHEKEKY. Disordered regions lie at residues 241-268 and 294-326; these read KGADRKQKIDREKMEKRTPHEKEKYQPS and FNSSHSSFSLGEGNGSPNHQPEPPPPVTDNLLP. S353 is modified (phosphoserine).

This sequence belongs to the grh/CP2 family. CP2 subfamily. As to quaternary structure, binds to DNA as a dimer. Interacts with UBP1 and PIAS1, and is probably part of a complex containing TFCP2, UBP1 and PIAS1. Component of the SSP (stage selector protein) complex, which appears to be a heteromer of TFCP2 and 2 copies of NFE4.

The protein resides in the nucleus. Functionally, binds a variety of cellular promoters including fibrinogen, alpha-globin promoters. Activation of the alpha-globin promoter in erythroid cells is via synergistic interaction with UBP1. Functions as part of the SSP (stage selector protein) complex. Facilitates the interaction of the gamma-globin genes with enhancer elements contained in the locus control region in fetal erythroid cells. Interacts by binding to the stage selector element (SSE) in the proximal gamma-globin promoter. The polypeptide is Alpha-globin transcription factor CP2 (Tfcp2) (Mus musculus (Mouse)).